The sequence spans 395 residues: Zinc-regulated GTPase metalloprotein activator 1A (395 aa).

Positions 1–22 are disordered; sequence MLPAVGSADEEEDPAEEDCPEL. Over residues 8-20 the composition is skewed to acidic residues; it reads ADEEEDPAEEDCP. The short motif at 17–24 is the psi-PxLVp motif element; the sequence is EDCPELVP. 49-56 contacts GTP; that stretch reads GYLGAGKT. Residues C107, C109, and C110 each coordinate Zn(2+). Residues 107 to 110 carry the CXCC motif motif; sequence CLCC. GTP is bound by residues 110-114 and 203-206; these read CSVKD and NKTD. The region spanning 274–377 is the CobW C-terminal domain; sequence IVTITFEVPG…ILKQLFIATV (104 aa).

The protein belongs to the SIMIBI class G3E GTPase family. ZNG1 subfamily. Ubiquitously expressed. Up-regulated in cultured astrocytes treated with dopamine.

It is found in the nucleus. It carries out the reaction GTP + H2O = GDP + phosphate + H(+). Functionally, zinc chaperone that directly transfers zinc cofactor to target metalloproteins, thereby activating them. Catalyzes zinc insertion into the active site of methionine aminopeptidase METAP1, which function to cleave the initiator methionine from polypeptides during or after protein translation. Mechanistically, the N-terminal psi-PxLVp motif binds to the C6H2-type zinc finger of inactive form of METAP1. After formation of the docked complex, zinc is transferred from the CXCC motif in the GTPase domain of ZNG1A to the zinc binding site in the peptidase domain of METAP1 in a process requiring GTP hydrolysis. GTP/GDP exchange is required for release of active METAP1. This chain is Zinc-regulated GTPase metalloprotein activator 1A, found in Homo sapiens (Human).